Here is a 216-residue protein sequence, read N- to C-terminus: 3-keto-L-gulonate-6-phosphate decarboxylase UlaD (216 aa).

Residue Asp11 coordinates substrate. Mg(2+) is bound by residues Glu33 and Asp62. A substrate-binding site is contributed by Arg192.

It belongs to the HPS/KGPDC family. KGPDC subfamily. As to quaternary structure, homodimer. Mg(2+) serves as cofactor.

The enzyme catalyses 3-dehydro-L-gulonate 6-phosphate + H(+) = L-xylulose 5-phosphate + CO2. Its pathway is cofactor degradation; L-ascorbate degradation; D-xylulose 5-phosphate from L-ascorbate: step 2/4. Its function is as follows. Catalyzes the decarboxylation of 3-keto-L-gulonate-6-P into L-xylulose-5-P. Is involved in the anaerobic L-ascorbate utilization. The polypeptide is 3-keto-L-gulonate-6-phosphate decarboxylase UlaD (Escherichia fergusonii (strain ATCC 35469 / DSM 13698 / CCUG 18766 / IAM 14443 / JCM 21226 / LMG 7866 / NBRC 102419 / NCTC 12128 / CDC 0568-73)).